We begin with the raw amino-acid sequence, 204 residues long: Probable UbiX-like flavin prenyltransferase (204 aa).

Residues 21–23 (GAT), Ser-47, 98–101 (SMKS), and Arg-133 contribute to the FMN site.

The protein belongs to the UbiX/PAD1 family. YclB subfamily. As to quaternary structure, homododecamer.

It carries out the reaction dimethylallyl phosphate + FMNH2 = prenylated FMNH2 + phosphate. In terms of biological role, involved in the non-oxidative decarboxylation and detoxification of phenolic derivatives under both aerobic and anaerobic conditions. Flavin prenyltransferase that catalyzes the synthesis of the prenylated FMN cofactor (prenyl-FMN) for phenolic acid decarboxylase. The chain is Probable UbiX-like flavin prenyltransferase from Bacillus subtilis (strain 168).